A 361-amino-acid chain; its full sequence is G2/mitotic-specific cyclin-B1 (361 aa).

The span at 1 to 13 (MLRATNNRRTSNN) shows a compositional bias: polar residues. The interval 1–33 (MLRATNNRRTSNNVEKDSLQMAKHGNGPLKPVN) is disordered.

The protein belongs to the cyclin family. Cyclin AB subfamily. Interacts with the CDK1 protein kinase to form a serine/threonine kinase holoenzyme complex also known as maturation promoting factor (MPF). The cyclin subunit imparts substrate specificity to the complex. Interacts with E3 ubiquitin-protein ligase etc-1. Post-translationally, ubiquitinated by etc-1 likely during meiosis, resulting in its degradation.

The protein resides in the cytoplasm. Essential for the control of the cell cycle at the G2/M (mitosis) transition. This Caenorhabditis elegans protein is G2/mitotic-specific cyclin-B1 (cyb-1).